Reading from the N-terminus, the 66-residue chain is Large ribosomal subunit protein bL33c (66 aa).

This sequence belongs to the bacterial ribosomal protein bL33 family.

It is found in the plastid. The protein localises to the chloroplast. The polypeptide is Large ribosomal subunit protein bL33c (Nicotiana sylvestris (Wood tobacco)).